A 260-amino-acid chain; its full sequence is Exosome complex component Rrp42 (260 aa).

Belongs to the RNase PH family. Rrp42 subfamily. In terms of assembly, component of the archaeal exosome complex. Forms a hexameric ring-like arrangement composed of 3 Rrp41-Rrp42 heterodimers. The hexameric ring associates with a trimer of Rrp4 and/or Csl4 subunits.

The protein resides in the cytoplasm. Non-catalytic component of the exosome, which is a complex involved in RNA degradation. Contributes to the structuring of the Rrp41 active site. In Thermoplasma acidophilum (strain ATCC 25905 / DSM 1728 / JCM 9062 / NBRC 15155 / AMRC-C165), this protein is Exosome complex component Rrp42.